The following is a 32-amino-acid chain: Fibrinolytic enzyme (32 aa).

In terms of processing, the N-terminus is blocked.

Its activity is regulated as follows. Inhibited by phenylmethanesulfonyl fluoride (PMSF). Not inhibited by EDTA, EGTA, beta-mercaptoethanol, indoacetamide, benzamidine, aprotinin, pepstatin A and trypsin inhibitor. Its function is as follows. Plasmin-like serine protease. Has fibrinolytic and fibrinogenolytic but not plasminogenolytic activity. Cleaves after Arg and Lys residues. The protein is Fibrinolytic enzyme of Hediste japonica (Polychaete worm).